The primary structure comprises 146 residues: Ribosome maturation factor RimP (146 aa).

The protein belongs to the RimP family.

Its subcellular location is the cytoplasm. Required for maturation of 30S ribosomal subunits. This chain is Ribosome maturation factor RimP, found in Dechloromonas aromatica (strain RCB).